Here is a 399-residue protein sequence, read N- to C-terminus: Guanine nucleotide-binding protein G(f) subunit alpha (399 aa).

Residues 46–399 (TTVKILLLGT…SENVSSMGLF (354 aa)) enclose the G-alpha domain. A G1 motif region spans residues 49–62 (KILLLGTAESGKTT). Residues 54–61 (GTAESGKT), 188–194 (LHSRKIT), 221–225 (DVGGQ), 290–293 (NKYD), and Ala-371 contribute to the GTP site. The segment at 186-194 (DILHSRKIT) is G2 motif. Residue Thr-194 coordinates Mg(2+). Residues 217–226 (FQMYDVGGQR) are G3 motif. The tract at residues 286–293 (IVFLNKYD) is G4 motif. The G5 motif stretch occupies residues 369 to 374 (TVATDT).

Belongs to the G-alpha family. G proteins are composed of 3 units; alpha, beta and gamma. The alpha chain contains the guanine nucleotide binding site. During embryogenesis, expressed primarily in the developing gut and transiently in the amnioserosa.

In terms of biological role, guanine nucleotide-binding proteins (G proteins) are involved as modulators or transducers in various transmembrane signaling systems. This is Guanine nucleotide-binding protein G(f) subunit alpha (Galphaf) from Drosophila melanogaster (Fruit fly).